The sequence spans 446 residues: Na(+)-translocating NADH-quinone reductase subunit A (446 aa).

It belongs to the NqrA family. In terms of assembly, composed of six subunits; NqrA, NqrB, NqrC, NqrD, NqrE and NqrF.

The catalysed reaction is a ubiquinone + n Na(+)(in) + NADH + H(+) = a ubiquinol + n Na(+)(out) + NAD(+). Its function is as follows. NQR complex catalyzes the reduction of ubiquinone-1 to ubiquinol by two successive reactions, coupled with the transport of Na(+) ions from the cytoplasm to the periplasm. NqrA to NqrE are probably involved in the second step, the conversion of ubisemiquinone to ubiquinol. In Vibrio parahaemolyticus serotype O3:K6 (strain RIMD 2210633), this protein is Na(+)-translocating NADH-quinone reductase subunit A.